Reading from the N-terminus, the 143-residue chain is Transcriptional regulator SlyA (143 aa).

Residues 2 to 135 (ESTLGSDLAR…LSTLVQKLEQ (134 aa)) enclose the HTH marR-type domain. Residues 49-72 (QIQLAKAIGIEQPSLVRTLDQLEE) constitute a DNA-binding region (H-T-H motif).

This sequence belongs to the SlyA family. Homodimer.

Functionally, transcription regulator that can specifically activate or repress expression of target genes. Regulates the cpm operon, which contains cpmA, cpmB, cpmC, cpmD, cpmE, cpmF, cpmG and cpmH, involved in carbapenem-like antibiotic production. The sequence is that of Transcriptional regulator SlyA from Photorhabdus laumondii subsp. laumondii (strain DSM 15139 / CIP 105565 / TT01) (Photorhabdus luminescens subsp. laumondii).